Consider the following 488-residue polypeptide: Zinc finger protein 345 (488 aa).

15 C2H2-type zinc fingers span residues 62 to 84 (LECK…QRIH), 90 to 112 (YECK…QRIH), 118 to 140 (FECK…QRIH), 146 to 168 (YECK…QIIH), 174 to 196 (YECK…HRIH), 202 to 224 (YECI…RRIH), 230 to 252 (YECK…QRIH), 258 to 280 (YICN…QRIH), 286 to 308 (YVCK…QRIH), 314 to 336 (YECK…QRMH), 342 to 364 (YECK…HRIH), 370 to 392 (YECK…QLIH), 398 to 420 (YECK…QRIH), 426 to 448 (YECK…QRIH), and 454 to 476 (YECK…KKSH).

Belongs to the krueppel C2H2-type zinc-finger protein family.

The protein localises to the nucleus. May be involved in transcriptional regulation. This Homo sapiens (Human) protein is Zinc finger protein 345 (ZNF345).